The primary structure comprises 572 residues: Zyxin (572 aa).

The residue at position 2 (Ala-2) is an N-acetylalanine. The disordered stretch occupies residues 23 to 351; it reads QKKFGPVVAP…VRSPGAPGPL (329 aa). 2 stretches are compositionally biased toward pro residues: residues 63-78 and 93-108; these read IPPP…PPPL and FPPP…PPAP. Residues Ser-116, Ser-142, Ser-143, Ser-169, and Ser-170 each carry the phosphoserine modification. Positions 143 to 156 are enriched in low complexity; sequence SIDLEIDSLSSLLD. Phosphothreonine is present on Thr-179. Over residues 202-239 the composition is skewed to low complexity; sequence SPSSSQPLPQVPAPAQSQTQFHVQPQPQPKPQVQLHVQ. Polar residues predominate over residues 240-252; it reads SQTQPVSLANTQP. Residue Arg-253 is modified to Asymmetric dimethylarginine. The span at 253–265 shows a compositional bias: pro residues; that stretch reads RGPPASSPAPAPK. The residue at position 259 (Ser-259) is a Phosphoserine. N6-acetyllysine is present on Lys-265. Ser-267 carries the post-translational modification Phosphoserine. Thr-270 is modified (phosphothreonine). Lys-272 bears the N6-acetyllysine mark. Thr-274 is subject to Phosphothreonine. Lys-279 is subject to N6-acetyllysine. 3 positions are modified to phosphoserine: Ser-281, Ser-288, and Ser-308. Residues 305–318 are compositionally biased toward polar residues; it reads GTGSPQPPSFTYAQ. A compositionally biased stretch (basic and acidic residues) spans 319-330; it reads QREKPRVQEKQH. Ser-344 bears the Phosphoserine mark. LIM zinc-binding domains lie at 384–443, 444–503, and 504–570; these read CGRC…TLEK, CNTC…YAPR, and CSVC…TARA.

The protein belongs to the zyxin/ajuba family. Interacts with HPV type 6 protein E6. Does not interact significantly with E6 proteins from HPV types 11, 16, or 18. Interacts, via the Pro-rich regions, with the EVH1 domains of ENAH, EVL and VASP. Interacts with the first LIM domain of TES. Interacts with NEBL (isoform 2). Interacts with SYNPO2. In terms of assembly, (Microbial infection) Interacts with human papillomavirus type 6/HPV6 protein E6. Does not interact significantly with E6 proteins from HPV types 11, 16, or 18.

The protein resides in the cytoplasm. It is found in the cytoskeleton. It localises to the nucleus. Its subcellular location is the cell junction. The protein localises to the focal adhesion. Functionally, adhesion plaque protein. Binds alpha-actinin and the CRP protein. Important for targeting TES and ENA/VASP family members to focal adhesions and for the formation of actin-rich structures. May be a component of a signal transduction pathway that mediates adhesion-stimulated changes in gene expression. This chain is Zyxin (ZYX), found in Homo sapiens (Human).